The chain runs to 380 residues: MIDFPIKYRLIKKEKYTGARLGEIITPHGTFPTPMFMPVGTQATVKTQSPEELQQMGSGIILANTYHLWLRPGDELIAKAGGLHKFMNWDQAILTDSGGFQVYSLAEKRDISEEGVTFKNHLNGSKMFLSPEKAISVQNNLGSDIMMSFDECPQFYQPYDYVKKSIERTSRWAERGLKAHRRPHDQGLFGIVQGAGFEDLRRQSSHDLVSMDFPGYSIGGLAVGETHEEMNAVLDFTVPLLPENKPRYLMGVGAPDSLIDGVIRGVDMYDCVLPTRIARNGTCMTSNGRLVVKNAAYAEDFSPIDPECDCYTCKNYTRAYVRHLLKADETFGIRLTSYHNLYFLVNLMAKVRQAIVDDNLLEFRQDFIEKYGYNASNRNF.

Asp96 (proton acceptor) is an active-site residue. Substrate contacts are provided by residues Asp96–Phe100, Asp150, Gln193, and Gly220. Residues Gly251–Ser257 are RNA binding. Asp270 serves as the catalytic Nucleophile. The interval Thr275–Arg279 is RNA binding; important for wobble base 34 recognition. Positions 308, 310, 313, and 339 each coordinate Zn(2+).

This sequence belongs to the queuine tRNA-ribosyltransferase family. As to quaternary structure, homodimer. Within each dimer, one monomer is responsible for RNA recognition and catalysis, while the other monomer binds to the replacement base PreQ1. It depends on Zn(2+) as a cofactor.

It carries out the reaction 7-aminomethyl-7-carbaguanine + guanosine(34) in tRNA = 7-aminomethyl-7-carbaguanosine(34) in tRNA + guanine. It functions in the pathway tRNA modification; tRNA-queuosine biosynthesis. Catalyzes the base-exchange of a guanine (G) residue with the queuine precursor 7-aminomethyl-7-deazaguanine (PreQ1) at position 34 (anticodon wobble position) in tRNAs with GU(N) anticodons (tRNA-Asp, -Asn, -His and -Tyr). Catalysis occurs through a double-displacement mechanism. The nucleophile active site attacks the C1' of nucleotide 34 to detach the guanine base from the RNA, forming a covalent enzyme-RNA intermediate. The proton acceptor active site deprotonates the incoming PreQ1, allowing a nucleophilic attack on the C1' of the ribose to form the product. After dissociation, two additional enzymatic reactions on the tRNA convert PreQ1 to queuine (Q), resulting in the hypermodified nucleoside queuosine (7-(((4,5-cis-dihydroxy-2-cyclopenten-1-yl)amino)methyl)-7-deazaguanosine). The polypeptide is Queuine tRNA-ribosyltransferase (Streptococcus thermophilus (strain ATCC BAA-250 / LMG 18311)).